The sequence spans 304 residues: Phosphatidylinositol mannoside acyltransferase (304 aa).

Residue His126 is the Proton acceptor of the active site. The hexadecanoyl-CoA site is built by His126 and Arg164. Glu200 is an active-site residue. Ser206 and Glu229 together coordinate hexadecanoyl-CoA.

It belongs to the LpxL/LpxM/LpxP family. As to quaternary structure, monomer.

The protein localises to the cell inner membrane. The catalysed reaction is a 2,6-O-bis(alpha-D-mannopyranosyl)-1-phosphatidyl-1D-myo-inositol + an acyl-CoA = a 2-O-(alpha-D-mannosyl)-6-O-(6-O-acyl-alpha-D-mannosyl)-1-phosphatidyl-1D-myo-inositol + CoA. The enzyme catalyses a 1,2-diacyl-sn-glycero-3-phospho-[alpha-D-mannopyranosyl-(1&lt;-&gt;6)-D-myo-inositol] + an acyl-CoA = a 1,2-diacyl-sn-glycero-3-phospho-[alpha-D-6-acyl-mannopyranosyl-(1&lt;-&gt;6)-D-myo-inositol] + CoA. The protein operates within phospholipid metabolism; phosphatidylinositol metabolism. Catalyzes the transfer of a palmitoyl moiety from palmitoyl-CoA to the 6-position of the mannose ring linked to the 2-position of myo-inositol in phosphatidyl-myo-inositol monomannoside (PIM1) or dimannoside (PIM2). This chain is Phosphatidylinositol mannoside acyltransferase, found in Mycolicibacterium smegmatis (strain ATCC 700084 / mc(2)155) (Mycobacterium smegmatis).